The following is a 306-amino-acid chain: MHHASLTKNLTHLQRLEAEAIHIFREVAASFSNPVMLYSVGKDSSVMLHLAMKAFYPAPPPFPFLHVDTTWKFREMIEFRDAQAREKGFELLVHINEDGVREGVGPFSHGSNVHTHVMKTVALRQALDKYKFDAAFGGARRDEEKSRAKERIFSFRSAQHGWDPKNQRPEMWKIYNTRVSAGESIRVFPLSNWTELDIWQYILQENIPIVPLYFAAHRPVVERDGMLIMLDDDRMKLRPGETVENRLVRFRTLGCYPLTGAIESSAADLSDIVEEMLIARTSERQGRAIDRDEAGSMEKKKREGYF.

Belongs to the PAPS reductase family. CysD subfamily. As to quaternary structure, heterodimer composed of CysD, the smaller subunit, and CysN.

The catalysed reaction is sulfate + ATP + H(+) = adenosine 5'-phosphosulfate + diphosphate. It participates in sulfur metabolism; hydrogen sulfide biosynthesis; sulfite from sulfate: step 1/3. Its function is as follows. With CysN forms the ATP sulfurylase (ATPS) that catalyzes the adenylation of sulfate producing adenosine 5'-phosphosulfate (APS) and diphosphate, the first enzymatic step in sulfur assimilation pathway. APS synthesis involves the formation of a high-energy phosphoric-sulfuric acid anhydride bond driven by GTP hydrolysis by CysN coupled to ATP hydrolysis by CysD. The protein is Sulfate adenylyltransferase subunit 2 of Brucella anthropi (strain ATCC 49188 / DSM 6882 / CCUG 24695 / JCM 21032 / LMG 3331 / NBRC 15819 / NCTC 12168 / Alc 37) (Ochrobactrum anthropi).